A 398-amino-acid chain; its full sequence is Acetate kinase (398 aa).

Residue Asn8 participates in Mg(2+) binding. ATP is bound at residue Lys15. Arg89 contacts substrate. Asp146 acts as the Proton donor/acceptor in catalysis. Residues 206-210 (HIGNG), 283-285 (DMR), and 331-335 (GMGEN) contribute to the ATP site. Residue Glu383 participates in Mg(2+) binding.

This sequence belongs to the acetokinase family. In terms of assembly, homodimer. Mg(2+) serves as cofactor. Requires Mn(2+) as cofactor.

The protein resides in the cytoplasm. It carries out the reaction acetate + ATP = acetyl phosphate + ADP. The protein operates within metabolic intermediate biosynthesis; acetyl-CoA biosynthesis; acetyl-CoA from acetate: step 1/2. In terms of biological role, catalyzes the formation of acetyl phosphate from acetate and ATP. Can also catalyze the reverse reaction. This is Acetate kinase from Streptococcus pyogenes serotype M28 (strain MGAS6180).